A 324-amino-acid chain; its full sequence is Mitochondrial oxaloacetate transport protein (324 aa).

3 Solcar repeats span residues 20–111, 126–218, and 227–312; these read ISKF…IRSS, QSVG…AKNI, and DGPA…TMKL. 6 helical membrane-spanning segments follow: residues 26-46, 79-99, 132-152, 193-213, 233-253, and 284-305; these read FVAGGLAACIAVTVTNPIELI, GIKGLQKGLNAAYIYQIGLNG, VFSGAASGIIGAVIGSPLFLV, GIDAAILRTGAGSSVQLPIYN, LTASTISGLGVAVVMNPWDVI, and LYKGFAAQVFRIAPHTIMCLTF.

This sequence belongs to the mitochondrial carrier (TC 2.A.29) family.

The protein localises to the mitochondrion inner membrane. It carries out the reaction a dicarboxylate(in) + sulfate(out) = a dicarboxylate(out) + sulfate(in). It catalyses the reaction (2S)-2-isopropylmalate(in) + sulfate(out) = (2S)-2-isopropylmalate(out) + sulfate(in). The enzyme catalyses (2R,3S)-3-isopropylmalate(in) + sulfate(out) = (2R,3S)-3-isopropylmalate(out) + sulfate(in). The catalysed reaction is malonate(in) + sulfate(out) = malonate(out) + sulfate(in). It carries out the reaction oxaloacetate(in) + sulfate(out) = oxaloacetate(out) + sulfate(in). It catalyses the reaction thiosulfate(in) + sulfate(out) = thiosulfate(out) + sulfate(in). Its activity is regulated as follows. Inhibited by alpha-keto isocaproate, an intermediate of leucine biosynthesis pathway. Functionally, antiporter that exchanges dicarboxylates and sulfur oxoanions across the inner membrane of mitochondria. Exports alpha-isopropylmalate from mitochondrial matrix to the cytosol, where it serves as a precursor for leucine biosynthesis. The sequence is that of Mitochondrial oxaloacetate transport protein (OAC1) from Saccharomyces cerevisiae (strain ATCC 204508 / S288c) (Baker's yeast).